We begin with the raw amino-acid sequence, 365 residues long: Peptide chain release factor 2 (365 aa).

Position 251 is an N5-methylglutamine (Gln251).

This sequence belongs to the prokaryotic/mitochondrial release factor family. Methylated by PrmC. Methylation increases the termination efficiency of RF2.

The protein resides in the cytoplasm. Its function is as follows. Peptide chain release factor 2 directs the termination of translation in response to the peptide chain termination codons UGA and UAA. In Campylobacter jejuni subsp. doylei (strain ATCC BAA-1458 / RM4099 / 269.97), this protein is Peptide chain release factor 2.